A 426-amino-acid polypeptide reads, in one-letter code: tRNA modification GTPase MnmE (426 aa).

(6S)-5-formyl-5,6,7,8-tetrahydrofolate is bound by residues Arg-20, Glu-77, and Met-117. In terms of domain architecture, TrmE-type G spans 213–350 (GFEVAILGAP…LLTDIEGVLS (138 aa)). Asn-223 contributes to the K(+) binding site. GTP contacts are provided by residues 223 to 228 (NAGKST), 242 to 248 (SDVPGTT), and 267 to 270 (DTAG). Residue Ser-227 participates in Mg(2+) binding. K(+)-binding residues include Ser-242, Val-244, and Thr-247. Thr-248 contributes to the Mg(2+) binding site. (6S)-5-formyl-5,6,7,8-tetrahydrofolate is bound at residue Lys-426.

This sequence belongs to the TRAFAC class TrmE-Era-EngA-EngB-Septin-like GTPase superfamily. TrmE GTPase family. In terms of assembly, homodimer. Heterotetramer of two MnmE and two MnmG subunits. K(+) is required as a cofactor.

It is found in the cytoplasm. Functionally, exhibits a very high intrinsic GTPase hydrolysis rate. Involved in the addition of a carboxymethylaminomethyl (cmnm) group at the wobble position (U34) of certain tRNAs, forming tRNA-cmnm(5)s(2)U34. In Jannaschia sp. (strain CCS1), this protein is tRNA modification GTPase MnmE.